A 762-amino-acid polypeptide reads, in one-letter code: 5-methyltetrahydropteroyltriglutamate--homocysteine methyltransferase (762 aa).

5-methyltetrahydropteroyltri-L-glutamate contacts are provided by residues 17–20 (REWK) and Lys-111. L-homocysteine-binding positions include 435 to 437 (IGS) and Glu-488. L-methionine-binding positions include 435 to 437 (IGS) and Glu-488. Residues 519–520 (RC) and Trp-565 contribute to the 5-methyltetrahydropteroyltri-L-glutamate site. Residue Asp-603 coordinates L-homocysteine. Asp-603 contributes to the L-methionine binding site. 5-methyltetrahydropteroyltri-L-glutamate is bound at residue Glu-609. 3 residues coordinate Zn(2+): His-645, Cys-647, and Glu-669. Residue His-698 is the Proton donor of the active site. Cys-730 is a Zn(2+) binding site.

This sequence belongs to the vitamin-B12 independent methionine synthase family. Requires Zn(2+) as cofactor.

The enzyme catalyses 5-methyltetrahydropteroyltri-L-glutamate + L-homocysteine = tetrahydropteroyltri-L-glutamate + L-methionine. Its pathway is amino-acid biosynthesis; L-methionine biosynthesis via de novo pathway; L-methionine from L-homocysteine (MetE route): step 1/1. Functionally, catalyzes the transfer of a methyl group from 5-methyltetrahydrofolate to homocysteine resulting in methionine formation. In Bacillus anthracis (strain CDC 684 / NRRL 3495), this protein is 5-methyltetrahydropteroyltriglutamate--homocysteine methyltransferase.